A 1028-amino-acid polypeptide reads, in one-letter code: Unconventional myosin-Ic (1028 aa).

An N-acetylmethionine modification is found at Met1. The region spanning 12 to 696 (GVQDFVLLEN…TLFATEDALE (685 aa)) is the Myosin motor domain. ATP is bound by residues Asn53, Tyr61, 104–113 (SGESGAGKTE), and 157–161 (NDNSS). Lys348 is subject to N6-methyllysine. The actin-binding stretch occupies residues 573–595 (LSKLMEILMSKEPSYIRCIKPND). IQ domains follow at residues 699 to 728 (KQSLATKMQATWRGFYRRKKFLHMKHSAIA) and 722 to 751 (MKHSAIAIQSWWRGTLGRRKAAKRKWAVQT). Residues 850–1024 (KDNYPQSVPR…NGHLTVVAPR (175 aa)) enclose the TH1 domain.

Belongs to the TRAFAC class myosin-kinesin ATPase superfamily. Myosin family. In terms of assembly, interacts (via its IQ motifs) with CALM.

It localises to the cytoplasm. The protein resides in the cell cortex. Its subcellular location is the cell projection. The protein localises to the ruffle membrane. It is found in the cytoplasmic vesicle. It localises to the stereocilium membrane. Functionally, myosins are actin-based motor molecules with ATPase activity. Unconventional myosins serve in intracellular movements. Their highly divergent tails are presumed to bind to membranous compartments, which would be moved relative to actin filaments. In Gallus gallus (Chicken), this protein is Unconventional myosin-Ic (MYO1C).